A 790-amino-acid chain; its full sequence is Disintegrin and metalloproteinase domain-containing protein 30 (790 aa).

Positions 1 to 27 are cleaved as a signal peptide; sequence MRSVQIFLSQCRLLLLLVPTMLLKSLG. Residues 28-198 constitute a propeptide that is removed on maturation; it reads EDVIFHPEGE…KARLRDFPGS (171 aa). A Cysteine switch motif is present at residues 170–177; it reads QVCGLSDD. Residue C172 participates in Zn(2+) binding. Over 199-687 the chain is Extracellular; the sequence is YKHPKYLELI…LRGAIPSSIW (489 aa). Residues 203–393 enclose the Peptidase M12B domain; the sequence is KYLELILLFD…SGATCLNNIP (191 aa). N-linked (GlcNAc...) asparagine glycosylation is present at N222. Cystine bridges form between C313/C388, C353/C373, and C355/C361. H338 is a binding site for Zn(2+). E339 is a catalytic residue. Residues H342 and H348 each coordinate Zn(2+). N372, N438, N473, and N625 each carry an N-linked (GlcNAc...) asparagine glycan. A Disintegrin domain is found at 399 to 485; that stretch reads LKRCGNKIVE…SCPNDVYKQD (87 aa). C457 and C477 form a disulfide bridge. Residues 629-663 enclose the EGF-like domain; the sequence is LQFDCLPEKCNTRGVCNNRKNCHCMYGWAPPFCEE. 3 cysteine pairs are disulfide-bonded: C633-C644, C638-C650, and C652-C661. The helical transmembrane segment at 688–708 threads the bilayer; it reads VVSIIMFRLILLILSVVFVFF. At 709–790 the chain is on the cytoplasmic side; that stretch reads RQVIGNHLKP…KAKSVKKQKK (82 aa). Positions 720–779 are enriched in basic and acidic residues; the sequence is QEKMPLSKAKTEQEESKTKTVQEESKTKTGQEESEAKTGQEESKAKTGQEESKANIESKR. A disordered region spans residues 720–790; sequence QEKMPLSKAK…KAKSVKKQKK (71 aa). Repeat copies occupy residues 732–740, 741–749, 750–758, 759–767, and 768–776. Residues 732 to 776 form a 5 X 9 AA approximate repeats region; sequence QEESKTKTVQEESKTKTGQEESEAKTGQEESKAKTGQEESKANIE. Residues 780 to 790 show a composition bias toward basic residues; it reads PKAKSVKKQKK.

Interacts with CTSD; this leads to activation of CTSD. Zn(2+) is required as a cofactor. Expressed in brain neurons (at protein level). Expressed in testis.

Its subcellular location is the late endosome membrane. Its function is as follows. Plays a role in lysosomal amyloid precursor protein (APP) processing by cleaving and activating CTSD/cathepsin D which leads to APP degradation. In Homo sapiens (Human), this protein is Disintegrin and metalloproteinase domain-containing protein 30 (ADAM30).